The chain runs to 250 residues: LOB domain-containing protein 37 (250 aa).

The 107-residue stretch at 1 to 107 folds into the LOB domain; sequence MSCNGCRVLR…VETVLRGGSL (107 aa). Positions 145-227 are disordered; that stretch reads DSTDRNIYHH…DSGTTTTTTA (83 aa). Low complexity predominate over residues 157-170; it reads FSSSRSRSTMDSSS.

Belongs to the LOB domain-containing protein family. In terms of tissue distribution, expressed in young shoots, roots, stems, leaves and flowers.

This Arabidopsis thaliana (Mouse-ear cress) protein is LOB domain-containing protein 37 (LBD37).